The following is a 558-amino-acid chain: Glucose-6-phosphate isomerase (558 aa).

Glu362 (proton donor) is an active-site residue. Catalysis depends on residues His393 and Lys523.

This sequence belongs to the GPI family.

The protein localises to the cytoplasm. The enzyme catalyses alpha-D-glucose 6-phosphate = beta-D-fructose 6-phosphate. It functions in the pathway carbohydrate degradation; glycolysis; D-glyceraldehyde 3-phosphate and glycerone phosphate from D-glucose: step 2/4. This chain is Glucose-6-phosphate isomerase (Pgi), found in Drosophila melanogaster (Fruit fly).